The chain runs to 484 residues: MTKSLLSLAVTAFILGGCSLIPDYQTPEAPVAAQWPQGPAYSPTQSADVAAAEQGWRQFFHDPALQQLIQTSLVNNRDLRVAALNLDAYRAQYRIQRADLFPAVSATGSGSRQRVPANMSQTGESGITSQYSATLGVSAYELDLFGRVRSLTEQALETYLSSEQARRSTQIALVASVANAYYTWQADQALFKLTEETLKTYEESYNLTRRSNEVGVASALDVSQARTAVEGARVKYSQYQRLVAQDVNSLTVLLGTGIPADLAKPLELDADQLAEVPAGLPSDILQRRPDIQEAEHLLKAANANIGAARAAFFPSISLTANAGSLSPDMGHLFSGGQGTWLFQPQINLPIFNAGSLKASLDYSKIQKDINVAKYEKTIQTAFQEVSDGLAARKTFEEQLQAQRDLVQANQDYYRLAERRYRIGIDSNLTFLDAQRNLFSAQQALIGDRLSQLTSEVNLYKALGGGWYEQTGQANQQASVETPKG.

Positions 1–17 (MTKSLLSLAVTAFILGG) are cleaved as a signal peptide. Cys-18 carries the N-palmitoyl cysteine lipid modification. Cys-18 is lipidated: S-diacylglycerol cysteine.

This sequence belongs to the outer membrane factor (OMF) (TC 1.B.17) family.

The protein resides in the cell outer membrane. Functionally, probable outer membrane component of the TtgABC efflux pump with unknown specificity. This Pseudomonas putida (strain ATCC 47054 / DSM 6125 / CFBP 8728 / NCIMB 11950 / KT2440) protein is Probable efflux pump outer membrane protein TtgC (ttgC).